The primary structure comprises 334 residues: E3 ubiquitin-protein ligase CIP8 (334 aa).

The disordered stretch occupies residues 111-158 (LNSRNEIDDDEDEDEDDGDEEEEDEEENLTVNDEEDEEDDLRRRNRFP). The segment covering 117-149 (IDDDEDEDEDDGDEEEEDEEENLTVNDEEDEED) has biased composition (acidic residues). Residues 257 to 298 (CAVCKDGMVMGETGKKLPCGHCYHGDCIVPWLGTRNSCPVCR) form an RING-type; atypical zinc finger. The disordered stretch occupies residues 307-334 (EYEEERKKRTSTVSDSAAASSSSSTSRY). Residues 317–334 (STVSDSAAASSSSSTSRY) are compositionally biased toward low complexity.

In terms of assembly, interacts with the RING finger of COP1. Interacts with UBC8 through its N-terminal region. As to expression, expressed in both light- and dark-grown seedlings.

Its subcellular location is the cytoplasm. The enzyme catalyses S-ubiquitinyl-[E2 ubiquitin-conjugating enzyme]-L-cysteine + [acceptor protein]-L-lysine = [E2 ubiquitin-conjugating enzyme]-L-cysteine + N(6)-ubiquitinyl-[acceptor protein]-L-lysine.. It functions in the pathway protein modification; protein ubiquitination. Its function is as follows. E3 ubiquitin-protein ligase that mediates ubiquitination and subsequent proteasomal degradation of target proteins. Probably forms a minimal ubiquitin ligase complex in cooperation with the E2 enzyme UBC8. Its interaction with COP1 suggests that it may participate in proteasome-mediated degradation of HY5 in vivo. This chain is E3 ubiquitin-protein ligase CIP8 (CIP8), found in Arabidopsis thaliana (Mouse-ear cress).